The following is a 119-amino-acid chain: MFKKVDKKASRTKRHLRVRKKVFGTPDRPRLSVFRSEKNIYAQIIDDVNAVTIVAASSLDKEFSTNGGNKEGAKLVGAAVAKKAIEKGITEVVFDRGGYVYHGRVQELAEGAREAGLKF.

It belongs to the universal ribosomal protein uL18 family. As to quaternary structure, part of the 50S ribosomal subunit; part of the 5S rRNA/L5/L18/L25 subcomplex. Contacts the 5S and 23S rRNAs.

This is one of the proteins that bind and probably mediate the attachment of the 5S RNA into the large ribosomal subunit, where it forms part of the central protuberance. The polypeptide is Large ribosomal subunit protein uL18 (Clostridium botulinum (strain Alaska E43 / Type E3)).